The chain runs to 562 residues: Protein wntless (562 aa).

At 1 to 15 the chain is on the cytoplasmic side; it reads MSGTILENLSGRKLS. A helical transmembrane segment spans residues 16 to 36; sequence ILVSSLMLCQVVCFLMGGLFA. Over 37 to 239 the chain is Lumenal; it reads PVPAGHQTVL…AIHQNGGFTQ (203 aa). N-linked (GlcNAc...) asparagine glycosylation is found at N58 and N103. A helical transmembrane segment spans residues 240-260; sequence VWLVLKTLLFPFVIGIMMWFW. Residues 261–275 lie on the Cytoplasmic side of the membrane; sequence RRVHILQRSPALLEY. Residues 276-296 traverse the membrane as a helical segment; sequence MLFYLGGALSFLNLPLELLTL. Topologically, residues 297 to 311 are lumenal; that stretch reads GVEMPYMLLLSDVRQ. A helical transmembrane segment spans residues 312–332; that stretch reads GIFYAMLLSFWLVFAGEHMLI. The Cytoplasmic segment spans residues 333–344; sequence QDSPSKSTIRSR. The helical transmembrane segment at 345–365 threads the bilayer; that stretch reads YWKHLSAVVVGCISLFVFDIC. Residues 366 to 390 lie on the Lumenal side of the membrane; the sequence is ERGVQMRNPFYSIWTTPLGAKVAMS. Residues 391–411 traverse the membrane as a helical segment; the sequence is FIVLAGVSAAIYFLFLCFMVW. The Cytoplasmic portion of the chain corresponds to 412-441; sequence KVFKDIGDKRTSLPSMSQARRLHYEGLIYR. A helical membrane pass occupies residues 442–462; the sequence is FKFLMLATLLCAGLTVAGFIM. The Lumenal segment spans residues 463–482; the sequence is GQMAEGHWKWNENIEIQLTS. Residues 483-503 form a helical membrane-spanning segment; it reads AFLTGVYGMWNIYIFALIILY. The Cytoplasmic portion of the chain corresponds to 504 to 562; it reads APSHKQWPTMRHSDETTQSNENIVASAASEEIEFSNLPSDSNPSEISSLTSFTRKVAFD.

It belongs to the wntless family. Interacts with wg; in the Golgi. Interacts with Vps35, a component of the retromer complex; wls stability is regulated by Vps35.

It localises to the presynaptic cell membrane. The protein localises to the postsynaptic cell membrane. The protein resides in the cell membrane. It is found in the endoplasmic reticulum membrane. Its subcellular location is the endosome membrane. It localises to the golgi apparatus membrane. Functionally, a segment polarity gene required for wingless (wg)-dependent patterning processes, acting in both wg-sending cells and wg-target cells. In non-neuronal cells wls directs wg secretion. The wls traffic loop encompasses the Golgi, the cell surface, an endocytic compartment and a retrograde route leading back to the Golgi, and involves clathrin-mediated endocytosis and the retromer complex (a conserved protein complex consisting of Vps35 and Vps26). In neuronal cells (the larval motorneuron NMJ), the wg signal moves across the synapse via the release of wls-containing exosome-like vesicles. Postsynaptic wls is required for the trafficking of fz2 through the fz2-interacting protein Grip. This chain is Protein wntless, found in Drosophila grimshawi (Hawaiian fruit fly).